A 789-amino-acid polypeptide reads, in one-letter code: E3 UFM1-protein ligase 1 (789 aa).

The segment at 2-212 (AADWEEIRRL…VSNLITRYGF (211 aa)) is required for E3 UFM1-protein ligase activity. Disordered stretches follow at residues 407–470 (LENS…TGRN) and 743–763 (SKKAEQEDDNKTEEEEGADTI). Residues 444–453 (KIKKTKKKGR) show a composition bias toward basic residues. A compositionally biased stretch (acidic residues) spans 748–760 (QEDDNKTEEEEGA).

Belongs to the UFL1 family. As to quaternary structure, catalytic component of the UFM1 ribosome E3 ligase (UREL) complex. Interacts with E2-like enzyme UFC1.

The protein resides in the endoplasmic reticulum membrane. It localises to the cytoplasm. The protein localises to the cytosol. Its subcellular location is the nucleus. It is found in the chromosome. Functionally, E3 protein ligase that mediates ufmylation, the covalent attachment of the ubiquitin-like modifier UFM1 to lysine residues on target proteins, and which plays a key role in various processes, such as ribosome recycling, response to DNA damage, interferon response or reticulophagy (also called ER-phagy). As part of the UREL complex, plays a key role in ribosome recycling by catalyzing mono-ufmylation of RPL26/uL24 subunit of the 60S ribosome. Ufmylation of RPL26/uL24 occurs on free 60S ribosomes following ribosome dissociation: it weakens the junction between post-termination 60S subunits and SEC61 translocons, promoting release and recycling of the large ribosomal subunit from the endoplasmic reticulum membrane. Ufmylation of RPL26/uL24 and subsequent 60S ribosome recycling either take place after normal termination of translation or after ribosome stalling during cotranslational translocation at the endoplasmic reticulum. Involved in reticulophagy in response to endoplasmic reticulum stress by mediating ufmylation of proteins such as CYB5R3 and RPN1, thereby promoting lysosomal degradation of ufmylated proteins. Ufmylation in response to endoplasmic reticulum stress is essential for processes such as hematopoiesis, blood vessel morphogenesis or inflammatory response. This Gallus gallus (Chicken) protein is E3 UFM1-protein ligase 1.